Consider the following 102-residue polypeptide: uncharacterized protein (102 aa).

This is an uncharacterized protein from Escherichia coli (strain K12).